The chain runs to 299 residues: Prohibitin-2 (299 aa).

Ala-2 bears the N-acetylalanine mark. Residues 19-49 (MGTALKLLLGAGAVAYGVRESVFTVEGGHRA) form a necessary for transcriptional repression region. A Phosphotyrosine modification is found at Tyr-128. Lys-147 carries the post-translational modification N6-acetyllysine. The tract at residues 150-174 (ASQLITQRAQVSLLIRRELTERAKD) is necessary for transcriptional repression. Ser-151 is subject to Phosphoserine. Residues 190 to 238 (SREYTAAVEAKQVAQQEAQRAQFLVEKAKQEQRQKIVQAEGEAEAAKML) are a coiled coil. Residues Lys-200, Lys-236, Lys-250, and Lys-262 each carry the N6-acetyllysine modification.

This sequence belongs to the prohibitin family. The mitochondrial prohibitin complex consists of two subunits (PHB1 and PHB2), assembled into a membrane-associated ring-shaped supercomplex of approximately 1 mDa. Interacts with ESR1, HDAC1 and HDAC5. Interacts with ZNF703. Interacts with STOML2. Interacts with ARFGEF3. Interacts with SPHK2. Interacts with COX4I1; the interaction associates PHB2 with COX. Interacts with MAP1LC3B (membrane-bound form LC3-II); the interaction is direct and upon mitochondrial depolarization and proteasome-dependent outer membrane rupture. Interacts with IGFBP6 (via C-terminal domain). Interacts with CLPB. Interacts with CD86 (via cytoplasmic domain); the interactions increases after priming with CD40. Interacts with AFG3L2. Interacts with DNAJC19. Interacts with AKT2; this interaction may be important for myogenic differentiation. Phosphorylated. Tyrosine phosphorylation is indirectly stimulated by IGFBP6.

The protein resides in the mitochondrion inner membrane. Its subcellular location is the cytoplasm. It localises to the nucleus. It is found in the cell membrane. In terms of biological role, protein with pleiotropic attributes mediated in a cell-compartment- and tissue-specific manner, which include the plasma membrane-associated cell signaling functions, mitochondrial chaperone, and transcriptional co-regulator of transcription factors and sex steroid hormones in the nucleus. Functionally, in the mitochondria, together with PHB, forms large ring complexes (prohibitin complexes) in the inner mitochondrial membrane (IMM) and functions as a chaperone protein that stabilizes mitochondrial respiratory enzymes and maintains mitochondrial integrity in the IMM, which is required for mitochondrial morphogenesis, neuronal survival, and normal lifespan. The prohibitin complex, with DNAJC19, regulates cardiolipin remodeling and the protein turnover of OMA1 in a cardiolipin-binding manner. Also regulates cytochrome-c oxidase assembly (COX) and mitochondrial respiration. Binding to sphingoid 1-phosphate (SPP) modulates its regulator activity. Has a key role of mitophagy receptor involved in targeting mitochondria for autophagic degradation. Involved in mitochondrial-mediated antiviral innate immunity, activates RIG-I-mediated signal transduction and production of IFNB1 and pro-inflammatory cytokine IL6. Its function is as follows. In the nucleus, serves as transcriptional co-regulator. Acts as a mediator of transcriptional repression by nuclear hormone receptors via recruitment of histone deacetylases. Functions as an estrogen receptor (ER)-selective coregulator that potentiates the inhibitory activities of antiestrogens and represses the activity of estrogens. Competes with NCOA1 for modulation of ER transcriptional activity. In the plasma membrane, is involved in IGFBP6-induced cell migration. Cooperates with CD86 to mediate CD86-signaling in B lymphocytes that regulates the level of IgG1 produced through the activation of distal signaling intermediates. Upon CD40 engagement, required to activate NF-kappa-B signaling pathway via phospholipase C and protein kinase C activation. The chain is Prohibitin-2 from Rattus norvegicus (Rat).